Here is a 445-residue protein sequence, read N- to C-terminus: Phosphoglucosamine mutase (445 aa).

Residue Ser-102 is the Phosphoserine intermediate of the active site. Residues Ser-102, Asp-241, Asp-243, and Asp-245 each coordinate Mg(2+). Ser-102 bears the Phosphoserine mark.

The protein belongs to the phosphohexose mutase family. Mg(2+) serves as cofactor. Post-translationally, activated by phosphorylation.

The enzyme catalyses alpha-D-glucosamine 1-phosphate = D-glucosamine 6-phosphate. Catalyzes the conversion of glucosamine-6-phosphate to glucosamine-1-phosphate. The polypeptide is Phosphoglucosamine mutase (Salmonella choleraesuis (strain SC-B67)).